A 106-amino-acid polypeptide reads, in one-letter code: Defensin-like protein 1 (106 aa).

Residues 1–25 form the signal peptide; that stretch reads MARSLCFMAFAVLAMMLFVAYEVQA. 4 cysteine pairs are disulfide-bonded: Cys29/Cys73, Cys40/Cys60, Cys46/Cys67, and Cys50/Cys69.

Belongs to the DEFL family.

The protein resides in the secreted. It localises to the vacuole. This Nicotiana paniculata protein is Defensin-like protein 1 (THIO1).